Consider the following 317-residue polypeptide: Apolipoprotein E (317 aa).

The first 18 residues, 1-18 (MKVLWAALLVTFLAGCQA), serve as a signal peptide directing secretion. 8 consecutive repeat copies span residues 80-101 (ALMD…EQLT), 102-123 (PVAE…ARLG), 124-145 (ADME…AMLG), 146-167 (QSTE…KRLL), 168-189 (RDAD…EGAE), 190-211 (RGVS…VRAA), 212-233 (TVGS…ERLR), and 234-255 (ARME…EQVA). Positions 80–255 (ALMDETMKEL…RLDEVKEQVA (176 aa)) are 8 X 22 AA approximate tandem repeats. Met-143 carries the post-translational modification Methionine sulfoxide. Ser-147 carries the post-translational modification Phosphoserine. The tract at residues 158–168 (HLRKLRKRLLR) is LDL and other lipoprotein receptors binding. Residue 162–165 (LRKR) participates in heparin binding. The lipid-binding and lipoprotein association stretch occupies residues 210 to 290 (AATVGSVAGK…SWFEPLVEDM (81 aa)). 229 to 236 (GERLRARM) contacts heparin. Residues 266–317 (QQIRLQAEAFQARLKSWFEPLVEDMQRQWAGLVEKVQAAVGTSAAPVPSDNH) form a homooligomerization region. Residues 278–290 (RLKSWFEPLVEDM) form a specificity for association with VLDL region.

Belongs to the apolipoprotein A1/A4/E family. Homotetramer. May interact with ABCA1; functionally associated with ABCA1 in the biogenesis of HDLs. May interact with APP/A4 amyloid-beta peptide; the interaction is extremely stable in vitro but its physiological significance is unclear. May interact with MAPT. May interact with MAP2. In the cerebrospinal fluid, interacts with secreted SORL1. Interacts with PMEL; this allows the loading of PMEL luminal fragment on ILVs to induce fibril nucleation. In terms of processing, APOE exists as multiple glycosylated and sialylated glycoforms within cells and in plasma. The extent of glycosylation and sialylation are tissue and context specific. Glycated in plasma VLDL. Post-translationally, phosphorylated by FAM20C in the extracellular medium.

The protein resides in the secreted. Its subcellular location is the extracellular space. It is found in the extracellular matrix. It localises to the extracellular vesicle. The protein localises to the endosome. The protein resides in the multivesicular body. Functionally, APOE is an apolipoprotein, a protein associating with lipid particles, that mainly functions in lipoprotein-mediated lipid transport between organs via the plasma and interstitial fluids. APOE is a core component of plasma lipoproteins and is involved in their production, conversion and clearance. Apolipoproteins are amphipathic molecules that interact both with lipids of the lipoprotein particle core and the aqueous environment of the plasma. As such, APOE associates with chylomicrons, chylomicron remnants, very low density lipoproteins (VLDL) and intermediate density lipoproteins (IDL) but shows a preferential binding to high-density lipoproteins (HDL). It also binds a wide range of cellular receptors including the LDL receptor/LDLR, the LDL receptor-related proteins LRP1, LRP2 and LRP8 and the very low-density lipoprotein receptor/VLDLR that mediate the cellular uptake of the APOE-containing lipoprotein particles. Finally, APOE also has a heparin-binding activity and binds heparan-sulfate proteoglycans on the surface of cells, a property that supports the capture and the receptor-mediated uptake of APOE-containing lipoproteins by cells. A main function of APOE is to mediate lipoprotein clearance through the uptake of chylomicrons, VLDLs, and HDLs by hepatocytes. APOE is also involved in the biosynthesis by the liver of VLDLs as well as their uptake by peripheral tissues ensuring the delivery of triglycerides and energy storage in muscle, heart and adipose tissues. By participating in the lipoprotein-mediated distribution of lipids among tissues, APOE plays a critical role in plasma and tissues lipid homeostasis. APOE is also involved in two steps of reverse cholesterol transport, the HDLs-mediated transport of cholesterol from peripheral tissues to the liver, and thereby plays an important role in cholesterol homeostasis. First, it is functionally associated with ABCA1 in the biogenesis of HDLs in tissues. Second, it is enriched in circulating HDLs and mediates their uptake by hepatocytes. APOE also plays an important role in lipid transport in the central nervous system, regulating neuron survival and sprouting. In Pongo pygmaeus (Bornean orangutan), this protein is Apolipoprotein E (APOE).